The chain runs to 503 residues: AMP phosphorylase (503 aa).

Residues G168, 194-199 (SRAITS), and T203 contribute to the AMP site. D256 functions as the Proton donor in the catalytic mechanism. Residues S264 and K288 each coordinate AMP.

It belongs to the thymidine/pyrimidine-nucleoside phosphorylase family. Type 2 subfamily.

It catalyses the reaction AMP + phosphate = alpha-D-ribose 1,5-bisphosphate + adenine. It carries out the reaction CMP + phosphate = cytosine + alpha-D-ribose 1,5-bisphosphate. The catalysed reaction is UMP + phosphate = alpha-D-ribose 1,5-bisphosphate + uracil. In terms of biological role, catalyzes the conversion of AMP and phosphate to adenine and ribose 1,5-bisphosphate (R15P). Exhibits phosphorylase activity toward CMP and UMP in addition to AMP. Functions in an archaeal AMP degradation pathway, together with R15P isomerase and RubisCO. The polypeptide is AMP phosphorylase (Pyrococcus horikoshii (strain ATCC 700860 / DSM 12428 / JCM 9974 / NBRC 100139 / OT-3)).